A 98-amino-acid chain; its full sequence is Hainantoxin-XVII-2 (98 aa).

An N-terminal signal peptide occupies residues 1–40; it reads MTTVGVSLFRRSPEKITMKIATFLGLSFLLIASYVLICEA. The propeptide occupies 41–64; the sequence is QHPGFQELLILEENMRDPENSKER. Cystine bridges form between Cys-66/Cys-81 and Cys-73/Cys-85.

It belongs to the hainantoxin family. 17 subfamily. Expressed by the venom gland.

It is found in the secreted. Functionally, putative ion channel inhibitor. This is Hainantoxin-XVII-2 from Cyriopagopus hainanus (Chinese bird spider).